The following is a 379-amino-acid chain: Anhydro-N-acetylmuramic acid kinase (379 aa).

An ATP-binding site is contributed by 9 to 16; it reads GTSVDGID.

The protein belongs to the anhydro-N-acetylmuramic acid kinase family.

The catalysed reaction is 1,6-anhydro-N-acetyl-beta-muramate + ATP + H2O = N-acetyl-D-muramate 6-phosphate + ADP + H(+). It participates in amino-sugar metabolism; 1,6-anhydro-N-acetylmuramate degradation. The protein operates within cell wall biogenesis; peptidoglycan recycling. In terms of biological role, catalyzes the specific phosphorylation of 1,6-anhydro-N-acetylmuramic acid (anhMurNAc) with the simultaneous cleavage of the 1,6-anhydro ring, generating MurNAc-6-P. Is required for the utilization of anhMurNAc either imported from the medium or derived from its own cell wall murein, and thus plays a role in cell wall recycling. The polypeptide is Anhydro-N-acetylmuramic acid kinase (Picosynechococcus sp. (strain ATCC 27264 / PCC 7002 / PR-6) (Agmenellum quadruplicatum)).